We begin with the raw amino-acid sequence, 401 residues long: Adenylosuccinate synthetase (401 aa).

Residues 11-17 and 39-41 contribute to the GTP site; these read GDEGKGK and GHT. Residue aspartate 12 is the Proton acceptor of the active site. The Mg(2+) site is built by aspartate 12 and glycine 39. Residues 12-15, 37-40, threonine 127, arginine 141, glutamine 212, threonine 227, and arginine 290 contribute to the IMP site; these read DEGK and NAGH. Histidine 40 serves as the catalytic Proton donor. Substrate is bound at residue 286-292; it reads ATTGRPR. GTP is bound by residues arginine 292, 318–320, and 390–392; these read KGD and SVG.

Belongs to the adenylosuccinate synthetase family. In terms of assembly, homodimer. Mg(2+) serves as cofactor.

It localises to the cytoplasm. The enzyme catalyses IMP + L-aspartate + GTP = N(6)-(1,2-dicarboxyethyl)-AMP + GDP + phosphate + 2 H(+). The protein operates within purine metabolism; AMP biosynthesis via de novo pathway; AMP from IMP: step 1/2. Its function is as follows. Plays an important role in the de novo pathway of purine nucleotide biosynthesis. Catalyzes the first committed step in the biosynthesis of AMP from IMP. The polypeptide is Adenylosuccinate synthetase (Thermosipho africanus (strain TCF52B)).